A 462-amino-acid polypeptide reads, in one-letter code: Protein Tube (462 aa).

The Death domain occupies 27 to 152 (YSRNTELRRV…SAADFVALDF (126 aa)). The interval 218–265 (RDKSVPQPSGNTPPIAPPRRQQRSTTNSNFATLTGTGTTSTTIPNVPN) is disordered. Positions 249 to 259 (TLTGTGTTSTT) are enriched in low complexity. 2 consecutive repeat copies span residues 262 to 269 (NVPNLTIL) and 286 to 293 (NIPDLSIL). Residues 262–460 (NVPNLTILNP…ACNIPDLSEL (199 aa)) form a 5 X approximate repeats region. A compositionally biased stretch (polar residues) spans 301–317 (RATVSDNPSNRTSSTDP). The interval 301–462 (RATVSDNPSN…NIPDLSELQQ (162 aa)) is disordered. Repeat 3 spans residues 319-326 (NIPRITLL). Residues 342-354 (AKASTATTSTASS) show a composition bias toward low complexity. A compositionally biased stretch (polar residues) spans 355-367 (NNLPMISALNISK). Residues 356–363 (NLPMISAL) form repeat 4. Residues 368 to 377 (GSRETLRPES) are compositionally biased toward basic and acidic residues. Positions 387–403 (DDDDDNDGEEDGEEEYP) are enriched in acidic residues. The span at 409 to 424 (NLSNSEQQSSNNDSSL) shows a compositional bias: low complexity. Residues 425-438 (TTVTGTSGDNSFEL) are compositionally biased toward polar residues. Over residues 439-449 (TNDSSSTSNDD) the composition is skewed to low complexity. The stretch at 453–460 (NIPDLSEL) is repeat 5.

Interacts (via Death domain) with pll (via Death domain). Phosphorylated by pll.

It localises to the cytoplasm. It is found in the cell membrane. Its function is as follows. Plays an essential role in the Tl receptor signaling pathway that establishes embryonic dorsoventral polarity; the signal directs import of dl into ventral and ventrolateral nuclei, thereby establishing dorsoventral polarity. Tub recruits pll to the plasma membrane and protein-protein interaction activates pll. Also has a role in pupal pattern formation. The polypeptide is Protein Tube (tub) (Drosophila melanogaster (Fruit fly)).